The following is a 534-amino-acid chain: Serine protease vicPb (534 aa).

The first 17 residues, Met1–Gly17, serve as a signal peptide directing secretion. Residues Asn34, Asn65, and Asn126 are each glycosylated (N-linked (GlcNAc...) asparagine). Ser174 functions as the Charge relay system in the catalytic mechanism. N-linked (GlcNAc...) asparagine glycosylation is found at Asn297, Asn335, Asn352, Asn415, and Asn437. Catalysis depends on Asp451, which acts as the Charge relay system.

It belongs to the peptidase S28 family.

The protein operates within mycotoxin biosynthesis. Its function is as follows. Serine protease, part of the gene cluster that mediates the biosynthesis of the secondary metabolite victorin, the molecular basis for Victoria blight of oats. Within the pathway, vicPa and vicPb are probably involved in the processing of the vicA1 and vicA2 precursors. The pathway starts with the processing of the precursor vicA1 by several endopeptidases including kexin proteases as well as the cluster-specific S28 family peptidases vicPa and vicPb to produce 7 identical copies of the hexapeptide Gly-Leu-Lys-Leu-Ala-Phe. After being excised from the precursor peptide, the core peptides are cyclized and modified post-translationally by enzymes encoded within the gene cluster. The ustYa family oxidase vicYb is required for the formation of the macrocycle in victorin and the copper amine oxidases (CAOs) vicK1 and vicK2 are responsible for converting victorin to the active form by oxidizing the N-terminal glycyl residue in the peptides to glyoxylate. Relaxed substrate specificity of enzymes in the victorin biosynthetic pathway results in a metabolic grid that produces a set of analogs including victorinines B, C, E or HV-toxin M. The chain is Serine protease vicPb from Bipolaris victoriae (strain FI3) (Victoria blight of oats agent).